Here is a 525-residue protein sequence, read N- to C-terminus: NGFI-A-binding protein 2 (525 aa).

A disordered region spans residues 1–22; that stretch reads MHRAPSPTAEQPPGGGDSARRT. The residue at position 6 (Ser-6) is a Phosphoserine. The tract at residues 35–113 is NCD1; sequence ALPRTLGELQ…REWATNPGLF (79 aa). Residues 135 to 237 form a disordered region; the sequence is GTRKGSMSNG…GGTGGGPDRL (103 aa). Phosphoserine occurs at positions 157, 159, 162, and 171. The segment covering 212–234 has biased composition (gly residues); that stretch reads AGGGVPEGTGAGGLAAGGTGGGP. Residues 267-356 form an NCD2 region; that stretch reads LLKLNKKLAR…SRQVARESTY (90 aa). Residues 353–384 are necessary for nuclear localization; that stretch reads ESTYLSSLKGSRLHPEELGGPPLKKLKQEVGE. Lys-379 participates in a covalent cross-link: Glycyl lysine isopeptide (Lys-Gly) (interchain with G-Cter in SUMO1). Residues 380–416 form a disordered region; sequence QEVGEQSHPEIQQPPPGPESYVPPYRPSLEEDSASLS. Ser-479 is modified (phosphoserine). The tract at residues 502-525 is disordered; it reads PGPHPALVEGRRSSVKVEAEASRQ. Residues 510–525 show a composition bias toward basic and acidic residues; the sequence is EGRRSSVKVEAEASRQ. Lys-517 is covalently cross-linked (Glycyl lysine isopeptide (Lys-Gly) (interchain with G-Cter in SUMO1); alternate). Residue Lys-517 forms a Glycyl lysine isopeptide (Lys-Gly) (interchain with G-Cter in SUMO2); alternate linkage.

It belongs to the NAB family. As to quaternary structure, homomultimers may associate with EGR1 bound to DNA. Sumoylation by EGR2 represses EGR2 transcriptional activity in hindbrain. In terms of tissue distribution, widely expressed at low levels. Highly expressed in melanoma cell lines.

Its subcellular location is the nucleus. In terms of biological role, acts as a transcriptional repressor for zinc finger transcription factors EGR1 and EGR2. Isoform 2 lacks repression ability. The protein is NGFI-A-binding protein 2 (NAB2) of Homo sapiens (Human).